Consider the following 218-residue polypeptide: MRVILLGAPGAGKGTQAQYISEAFDIPQISTGDMLRAAVKAQSELGMAAKKVMDEGGLVPDDIIIGLVKERIEEDDCANGCLFDGFPRTIAQADALRTEGIRIDNIIEIDVPDEEIIKRMSGRRVHPASGRTYHIVFNPPAVEGKDDVTGEDLVQRDDDTEETVRKRLKVYHDQTEPLVGYYRNLAIEGSDDAPKYSCINGIGQVEQIKQDIIAALKQ.

An ATP-binding site is contributed by 10–15; it reads GAGKGT. The NMP stretch occupies residues 30–59; the sequence is STGDMLRAAVKAQSELGMAAKKVMDEGGLV. Residues threonine 31, arginine 36, 57 to 59, 85 to 88, and glutamine 92 each bind AMP; these read GLV and GFPR. The LID stretch occupies residues 122-159; that stretch reads GRRVHPASGRTYHIVFNPPAVEGKDDVTGEDLVQRDDD. ATP is bound by residues arginine 123 and 132-133; that span reads TY. Residues arginine 156 and arginine 167 each contribute to the AMP site. An ATP-binding site is contributed by glycine 203.

This sequence belongs to the adenylate kinase family. As to quaternary structure, monomer.

It localises to the cytoplasm. The catalysed reaction is AMP + ATP = 2 ADP. It functions in the pathway purine metabolism; AMP biosynthesis via salvage pathway; AMP from ADP: step 1/1. Its function is as follows. Catalyzes the reversible transfer of the terminal phosphate group between ATP and AMP. Plays an important role in cellular energy homeostasis and in adenine nucleotide metabolism. In Chlorobaculum parvum (strain DSM 263 / NCIMB 8327) (Chlorobium vibrioforme subsp. thiosulfatophilum), this protein is Adenylate kinase.